A 255-amino-acid chain; its full sequence is ParA family protein TC_0871 (255 aa).

Belongs to the ParA family.

The protein is ParA family protein TC_0871 of Chlamydia muridarum (strain MoPn / Nigg).